The following is a 189-amino-acid chain: MAPAWSLLLALLLLSCNAICSLGCHLPHTHSLANRRVLTLLRQLRRVSPSSCLQDRNDFAFPQEALGGSQLQKAQAISVLHEVTQHTFQFFSVEGSAVVWDESLLDKLRDALDQQLTDLQFCLRQEEGLRGAPLLKEDSSLAVRKYFHRLTLYLQEKRHSPCAWEVVRAEVMRAFSSSTNLQERFRRKD.

The signal sequence occupies residues 1 to 23 (MAPAWSLLLALLLLSCNAICSLG). 2 disulfide bridges follow: Cys24–Cys122 and Cys52–Cys162.

Belongs to the alpha/beta interferon family.

Its subcellular location is the secreted. Its function is as follows. Produced by macrophages, IFN-alpha have antiviral activities. Interferon stimulates the production of two enzymes: a protein kinase and an oligoadenylate synthetase. The sequence is that of Interferon alpha-G (IFNAG) from Bos taurus (Bovine).